The following is a 521-amino-acid chain: Glucose-6-phosphate isomerase (521 aa).

Glu327 serves as the catalytic Proton donor. Active-site residues include His358 and Lys486.

Belongs to the GPI family.

The protein localises to the cytoplasm. It carries out the reaction alpha-D-glucose 6-phosphate = beta-D-fructose 6-phosphate. It participates in carbohydrate biosynthesis; gluconeogenesis. The protein operates within carbohydrate degradation; glycolysis; D-glyceraldehyde 3-phosphate and glycerone phosphate from D-glucose: step 2/4. Functionally, catalyzes the reversible isomerization of glucose-6-phosphate to fructose-6-phosphate. The polypeptide is Glucose-6-phosphate isomerase (Bordetella bronchiseptica (strain ATCC BAA-588 / NCTC 13252 / RB50) (Alcaligenes bronchisepticus)).